Consider the following 2346-residue polypeptide: Highly reducing polyketide synthase claI (2346 aa).

The Ketosynthase family 3 (KS3) domain occupies 10-412 (TPAIAVVGMA…GTNCHLIVED (403 aa)). Residues cysteine 183, histidine 295, and histidine 335 each act as for beta-ketoacyl synthase activity in the active site. Residues 530-842 (IFTGQGSQWP…EYFSALKRGE (313 aa)) form a malonyl-CoA:ACP transacylase (MAT) domain region. Serine 622 (for malonyltransferase activity) is an active-site residue. The segment at 912–1048 (HDLLGSKILG…GLIRTSEEDS (137 aa)) is N-terminal hotdog fold. The dehydratase (DH) domain stretch occupies residues 912-1213 (HDLLGSKILG…INGLRFSSVD (302 aa)). The PKS/mFAS DH domain maps to 912–1218 (HDLLGSKILG…FSSVDLGSVQ (307 aa)). The Proton acceptor; for dehydratase activity role is filled by histidine 944. The tract at residues 1060–1218 (IHATPAQVWY…FSSVDLGSVQ (159 aa)) is C-terminal hotdog fold. Catalysis depends on aspartate 1124, which acts as the Proton donor; for dehydratase activity. The tract at residues 1633 to 1946 (GSLEALQWTQ…SARHIGKILI (314 aa)) is enoyl reductase (ER) domain. Positions 1972–2151 (TYLIVGGLRG…HSLDLGVVDA (180 aa)) are ketoreductase (KR) domain. A Carrier domain is found at 2258-2336 (SQLVEKAVTL…ALAEKMVSKV (79 aa)). Serine 2296 carries the post-translational modification O-(pantetheine 4'-phosphoryl)serine.

Pantetheine 4'-phosphate serves as cofactor.

Its pathway is secondary metabolite biosynthesis. In terms of biological role, highly reducing polyketide synthase; part of the cla gene cluster that produces clavatol and ortho-quinone methide. The clavatol biosynthesis cluster cla and the terrestric acid cluster tra are both involved in the production of peniphenones and penilactones. The non-reducing PKS claF is responsible for the formation of clavatol from successive condensations of 3 malonyl-CoA units, presumably with a simple acetyl-CoA starter unit, and 2 methylation steps. The esterase claE probably collaborates with claF by catalyzing the hydrolysis of ACP-bound acyl intermediates to free the ACP from stalled intermediates. The clavatol oxidase claD then converts clavatol to hydroxyclavatol. Spontaneous dehydration of hydroxyclavatol leads to the accumulation of the highly active ortho-quinone methide. On the other hand, the PKS-NRPS hybrid traA is involved in the formation of crustosic acid, with the help of traB and traD. The polyketide synthase module (PKS) of traA is responsible for the synthesis of the polyketide backbone via the condensation of an acetyl-CoA starter unit with 3 malonyl-CoA units. The downstream nonribosomal peptide synthetase (NRPS) module then amidates the carboxyl end of the polyketide with L-malic acid. Because traA lacks a designated enoylreductase (ER) domain, the required activity is provided the enoyl reductase traG. Crustosic acid undergoes decarboxylation and isomerization to the terrestric acid, catalyzed by the 2-oxoglutarate-dependent dioxygenase traH. Both acids are further converted to the 2 gamma-butyrolactones (R)-5-methyltetronic acid and (S)-5-carboxylmethyltetronic acid, with involvement of the cytochrome P450 monooxygenase claJ. Spontaneous addition of the methide to these gamma-butyrolactones leads to peniphenone D and penilactone D, which undergo again stereospecific attacking by methide to give penilactones A and B. The function of the highly reducing polyketide synthase claI has not been investigated yet. This Penicillium crustosum (Blue mold fungus) protein is Highly reducing polyketide synthase claI.